The primary structure comprises 113 residues: MPSRAATSPLNVQMMVVLCIVCLALQAVAANATRSKNNVPRRFPRARYRVGYMFGKRSSSETYSTNLINLLSRQLVSQEELRAILEKQPILLDEVVKILDRNDDGYITVADLL.

A signal peptide spans 1–32; the sequence is MPSRAATSPLNVQMMVVLCIVCLALQAVAANA. Phenylalanine amide is present on Phe54. The propeptide occupies 58-113; it reads SSSETYSTNLINLLSRQLVSQEELRAILEKQPILLDEVVKILDRNDDGYITVADLL. The region spanning 87–113 is the EF-hand domain; the sequence is KQPILLDEVVKILDRNDDGYITVADLL. Ca(2+)-binding residues include Asp100, Asn102, Asp104, Tyr106, and Asp111.

As to expression, seems to be specific to the mechanosensory neurons of the central nervous system.

It is found in the secreted. Functionally, may function as an inhibitory cotransmitter acting in conjunction with the fast excitatory transmitter released by sensory neurons. The peptide selectively inhibits certain postsynaptic cells probably by means of sensorin A release. The chain is Sensorin-A (PSC1) from Aplysia californica (California sea hare).